A 1711-amino-acid chain; its full sequence is Protein chiffon (1711 aa).

Disordered stretches follow at residues 1–31 (MQPQSDKQSASRLATTTSHSTAAASATAATP), 87–129 (KPEV…SRAD), and 244–307 (TKSK…IDSS). Residues 1 to 400 (MQPQSDKQSA…PALREKSKRI (400 aa)) form a sufficient for interaction with and activation of Cdc7 region. Low complexity-rich tracts occupy residues 10 to 30 (ASRLATTTSHSTAAASATAAT) and 97 to 109 (TPGTPSTPGTPTS). Phosphoserine occurs at positions 306 and 307. The DBF4-type zinc finger occupies 307 to 356 (SEKQGGVCEICKLEYDILNIHLQSKDHELFAKNSDNFLALDTLIQSSADV). Zn(2+)-binding residues include Cys-314, Cys-317, His-327, and His-333. Residues 365 to 378 (VESELDMDVDESLS) show a composition bias toward acidic residues. 11 disordered regions span residues 365-507 (VESE…DSPS), 531-647 (MFPR…KPQL), 733-771 (LDEEVDSSCSSGSDEDYIAGSQRRITAAPRKSTDTREQR), 791-817 (TEVKTSPSKSRTKIQKPSSPTKNKVKQ), 908-945 (QDKGEQIKLEDQKPAPKKEVKKEEEVQSSSSSATYKNK), 1005-1025 (RSTSSSSCSNSQRSGITCRNK), 1055-1157 (QRQD…RNQS), 1271-1290 (ESEGREERLVNTPQTPPPTD), 1303-1329 (MGSAGSGDDDEDVSRGNPPGSGRRMSN), 1343-1370 (LKSNRTGWPKAQRRRNAGGLGGSRALPD), and 1383-1644 (LHPI…SKYA). Phosphoserine occurs at positions 406, 407, 417, 432, and 435. Positions 429 to 439 (QGNSPGSLSEL) are enriched in polar residues. The segment covering 445–454 (PTTAAATPTT) has biased composition (low complexity). Ser-467 is subject to Phosphoserine. Residues 493-505 (PRGRGRPPNQVDS) constitute a DNA-binding region (a.T hook). Polar residues predominate over residues 537–546 (VPTTRSSSEL). Phosphoserine occurs at positions 542, 543, and 544. Residues 549–560 (DVDRQTTSDVRG) show a composition bias toward basic and acidic residues. Low complexity predominate over residues 563–575 (SISSASLDTSTSE). The segment covering 588–601 (IRKRAQAVGRRRKV) has biased composition (basic residues). A compositionally biased stretch (polar residues) spans 793–812 (VKTSPSKSRTKIQKPSSPTK). The segment covering 908–932 (QDKGEQIKLEDQKPAPKKEVKKEEE) has biased composition (basic and acidic residues). Residues 1006–1018 (STSSSSCSNSQRS) are compositionally biased toward low complexity. A Phosphothreonine modification is found at Thr-1081. Ser-1091 and Ser-1092 each carry phosphoserine. The segment covering 1092-1101 (SPRTTRSQAA) has biased composition (polar residues). Positions 1398-1407 (TTTTTTTTTT) are enriched in low complexity. The tract at residues 1400 to 1695 (TTTTTTTTSA…NAWRRTQRRA (296 aa)) is sufficient for interaction with Gcn5. Basic and acidic residues predominate over residues 1435–1445 (ADDKQNSREDA). Acidic residues-rich tracts occupy residues 1453 to 1475 (DVDEQAEPQADEMESLPDEDETM) and 1483 to 1518 (QDVEAEIEATDADVEEEEEEEDEDEDVFEDAYEEQD). Polar residues-rich tracts occupy residues 1536 to 1545 (ISVTTPPEDS) and 1556 to 1591 (HNGQRLQATSTPSTGQVQQHQRRTPQLNGSLGSCIS).

Component of the Dbf4-dependent kinase (DDK) complex consisting of Cdc7 and the Dbf4 ortholog chif. Interacts with Cdc7; the interaction is direct. Interacts with CG5790. In terms of assembly, component of the Chiffon histone acetyltransferase (CHAT) complex consisting of Ada3, Sgf29, Gcn5, chif/chiffon and Ada2b (Isoform A). Interacts (via C-terminus) with Gcn5; the interaction is direct but weak in the absence of other CHAT components. Post-translationally, may be proteolytically cleaved to produce a N-terminal 50 kDa product.

The protein resides in the nucleus. Its function is as follows. A bicistronic gene producing two proteins that are components of different complexes and have separate properties and functions. Full-length protein is proteolytically cleaved, producing a ~50kDa N-terminal product (Chiffon-A) that forms part of the DDK complex; it is unclear if the C-terminal proteolytic product is stable or functional. Alternative initiation from an internal ribosome entry site produces a C-terminal ~48kDa product (Chiffon-B or Isoform E) that forms part of the CHAT complex. Involved in regulation of gene expression during embryonic development. Functionally, regulatory component of the Dbf4-dependent kinase (DDK) complex. Required for the amplification stage, but not the preceding endoreplication stage of DNA replication in egg chamber follicle cells of the ovary. May be involved in initiation of DNA replication; activation of the chorion gene origins. May have a role in eye and thoracic bristle development. Required for female fertility; is not required for oogenesis but is required maternally for early embryo development. In terms of biological role, component of the CHAT histone acetyltransferase complex, which predominantly acetylates histone H3. As part of the CHAT complex involved in acetylation of histone H3 on 'Lys-10' (H3K9ac), 'Lys-15' (H3K14ac) and 'Lys-19' (H3K18ac), but not 'Lys-25' (H3K24ac). May also regulate other histone acetyltransferase complexes. Essential for viability. Not required for early stages of embryonic development. May be involved in zygotic genome activation during embryogenesis. The polypeptide is Protein chiffon (Drosophila melanogaster (Fruit fly)).